Here is a 234-residue protein sequence, read N- to C-terminus: MDSITTLIVEDEPMLAEILVDNIKQFPQFDVIGIADKLESARKQLRLYQPQLILLDNFLPDGKGIDLIRHAVSTHYKGRIIFITADNHMETISEALRLGVFDYLIKPVHYQRLQHTLERFARYRSSLRSSEQASQLHVDALFNIQAREQTEPASAPLRGIDESTFQRVLQLFADPTVVHTADSLARILGSSKTTARRYLEQGVKNDFLEAEISYGKVGRPERIYHGKQTYPEQR.

A Response regulatory domain is found at 5 to 121; that stretch reads TTLIVEDEPM…RLQHTLERFA (117 aa). Asp-56 carries the 4-aspartylphosphate modification. The H-T-H motif DNA-binding region spans 181 to 200; that stretch reads ADSLARILGSSKTTARRYLE.

In terms of assembly, in vitro CitB and the CitA kinase domain form a complex, formation of which is enhanced by ATP. Post-translationally, phosphorylated by CitA.

It is found in the cytoplasm. In terms of biological role, member of the two-component regulatory system CitA/CitB essential for expression of citrate-specific fermentation genes. Phosphorylated CitB binds to two sites in the citS-citC intergenic region where it probably activates transcription of both genes. This is Transcriptional regulatory protein CitB (citB) from Klebsiella pneumoniae.